The chain runs to 222 residues: Large ribosomal subunit protein mL64 (222 aa).

Disordered stretches follow at residues 19 to 46 (APGS…EDLL) and 188 to 222 (KRLK…APSS). Basic residues predominate over residues 25–36 (YRARPPPRRRPG). A coiled-coil region spans residues 99 to 212 (MQESLRVKQL…AAALAAAVAQ (114 aa)). Residues 184–200 (KKERKRLKEEKQKRKKE) carry the Nuclear localization signal motif. Positions 203 to 212 (AAALAAAVAQ) are enriched in low complexity.

Belongs to the mitochondrion-specific ribosomal protein mL64 family. As to quaternary structure, component of the mitochondrial large ribosomal subunit (mt-LSU). Mature mammalian 55S mitochondrial ribosomes consist of a small (28S) and a large (39S) subunit. The 28S small subunit contains a 12S ribosomal RNA (12S mt-rRNA) and 30 different proteins. The 39S large subunit contains a 16S rRNA (16S mt-rRNA), a copy of mitochondrial valine transfer RNA (mt-tRNA(Val)), which plays an integral structural role, and 52 different proteins. Interacts with GADD45A, GADD45B and GADD45G. Interacts with NR4A1 via the NR4A1 AB domain. Interacts with ATAD3A and ATAD3B. (Microbial infection) Interacts with the human papilloma virus type 16 (HPV 16) minor capsid protein L2. As to expression, widely expressed. Highly expressed in the thyroid gland, heart, lymph nodes, trachea and adrenal tissues. Expressed at lower level in liver skeletal muscle, kidney, pancreas, testis, ovary and stomach. Barely detectable in adrenal adenoma and papillary thyroid cancer.

Its subcellular location is the mitochondrion. The protein resides in the nucleus. Functionally, acts as a negative regulator of G1 to S cell cycle phase progression by inhibiting cyclin-dependent kinases. Inhibitory effects are additive with GADD45 proteins but also occur in the absence of GADD45 proteins. Acts as a repressor of the orphan nuclear receptor NR4A1 by inhibiting AB domain-mediated transcriptional activity. May be involved in the hormone-mediated regulation of NR4A1 transcriptional activity. May play a role in mitochondrial protein synthesis. In Homo sapiens (Human), this protein is Large ribosomal subunit protein mL64 (GADD45GIP1).